Reading from the N-terminus, the 480-residue chain is UDP-N-acetylmuramate--L-alanine ligase (480 aa).

126-132 lines the ATP pocket; sequence GTHGKTT.

Belongs to the MurCDEF family.

It is found in the cytoplasm. It carries out the reaction UDP-N-acetyl-alpha-D-muramate + L-alanine + ATP = UDP-N-acetyl-alpha-D-muramoyl-L-alanine + ADP + phosphate + H(+). Its pathway is cell wall biogenesis; peptidoglycan biosynthesis. In terms of biological role, cell wall formation. The polypeptide is UDP-N-acetylmuramate--L-alanine ligase (Blochmanniella pennsylvanica (strain BPEN)).